The primary structure comprises 306 residues: Dihydroorotate dehydrogenase B (NAD(+)), catalytic subunit (306 aa).

Residues serine 22 and 46 to 47 (KG) each bind FMN. Substrate-binding positions include lysine 46 and 70–74 (NAIGL). Asparagine 100 and asparagine 128 together coordinate FMN. Asparagine 128 is a binding site for substrate. Cysteine 131 serves as the catalytic Nucleophile. Residues lysine 167 and isoleucine 193 each contribute to the FMN site. Position 194–195 (194–195 (NT)) interacts with substrate. FMN is bound by residues glycine 219, 245–246 (GG), and 267–268 (GT).

This sequence belongs to the dihydroorotate dehydrogenase family. Type 1 subfamily. As to quaternary structure, heterotetramer of 2 PyrK and 2 PyrD type B subunits. FMN is required as a cofactor.

The protein localises to the cytoplasm. It carries out the reaction (S)-dihydroorotate + NAD(+) = orotate + NADH + H(+). The protein operates within pyrimidine metabolism; UMP biosynthesis via de novo pathway; orotate from (S)-dihydroorotate (NAD(+) route): step 1/1. Catalyzes the conversion of dihydroorotate to orotate with NAD(+) as electron acceptor. The chain is Dihydroorotate dehydrogenase B (NAD(+)), catalytic subunit (pyrD) from Solidesulfovibrio magneticus (strain ATCC 700980 / DSM 13731 / RS-1) (Desulfovibrio magneticus).